We begin with the raw amino-acid sequence, 156 residues long: Ribosomal RNA large subunit methyltransferase H (156 aa).

S-adenosyl-L-methionine is bound by residues Leu73, Gly104, and 123–128 (LSSLTL).

It belongs to the RNA methyltransferase RlmH family. In terms of assembly, homodimer.

The protein resides in the cytoplasm. It carries out the reaction pseudouridine(1915) in 23S rRNA + S-adenosyl-L-methionine = N(3)-methylpseudouridine(1915) in 23S rRNA + S-adenosyl-L-homocysteine + H(+). Its function is as follows. Specifically methylates the pseudouridine at position 1915 (m3Psi1915) in 23S rRNA. In Bordetella avium (strain 197N), this protein is Ribosomal RNA large subunit methyltransferase H.